The following is a 259-amino-acid chain: Envelope biogenesis factor ElyC (259 aa).

2 helical membrane passes run 12-32 and 39-59; these read MLLPLPLMLLIIGAGLALLWF and GKIFISIGWLALLLLSLQPVA.

Its subcellular location is the cell inner membrane. Functionally, plays a critical role in the metabolism of the essential lipid carrier used for cell wall synthesis. This chain is Envelope biogenesis factor ElyC (elyC), found in Escherichia coli O157:H7.